We begin with the raw amino-acid sequence, 242 residues long: Ribonuclease 3 2 (242 aa).

The RNase III domain occupies 12-137 (LESLVRKLGL…VLGALYLSTS (126 aa)). Glutamate 51 lines the Mg(2+) pocket. Residue aspartate 55 is part of the active site. Aspartate 123 and glutamate 126 together coordinate Mg(2+). Glutamate 126 is a catalytic residue. The region spanning 165-235 (NYKAALQEWT…AKVAFLAITP (71 aa)) is the DRBM domain.

Belongs to the ribonuclease III family. As to quaternary structure, homodimer. It depends on Mg(2+) as a cofactor.

It localises to the cytoplasm. It carries out the reaction Endonucleolytic cleavage to 5'-phosphomonoester.. Its function is as follows. Digests double-stranded RNA. Involved in the processing of primary rRNA transcript to yield the immediate precursors to the large and small rRNAs (23S and 16S). Processes some mRNAs, and tRNAs when they are encoded in the rRNA operon. Processes pre-crRNA and tracrRNA of type II CRISPR loci if present in the organism. The sequence is that of Ribonuclease 3 2 (rnc2) from Nostoc sp. (strain PCC 7120 / SAG 25.82 / UTEX 2576).